The primary structure comprises 559 residues: NAD-dependent malic enzyme 2 (559 aa).

The active-site Proton donor is Y98. R151 contributes to the NAD(+) binding site. K169 (proton acceptor) is an active-site residue. E240, D241, and D264 together coordinate a divalent metal cation. Positions 264 and 413 each coordinate NAD(+).

This sequence belongs to the malic enzymes family. As to quaternary structure, homotetramer. Mg(2+) is required as a cofactor. Requires Mn(2+) as cofactor.

The catalysed reaction is (S)-malate + NAD(+) = pyruvate + CO2 + NADH. It catalyses the reaction oxaloacetate + H(+) = pyruvate + CO2. This is NAD-dependent malic enzyme 2 from Vibrio vulnificus (strain YJ016).